Reading from the N-terminus, the 314-residue chain is MATELDKIFLILAIAEFIISMLGNVFIGLVNCSEGIKNQKVFSADFILTCLAISTIGQLLVILFDSFLVGLASHLYTTYRLGKTVIMLWHMTNHLTTWLATCLSIFYFFKIAHFPHSLFLWLRWRMNGMIVMLLILSLFLLIFDSLVLEIFIDISLNIIDKSNLTLYLDESKTLYDKLSILKTLLSLTSFIPFSLFLTSLLFLFLSLVRHTRNLKLSSLGSRDSSTEAHRRAMKMVMSFLFLFIVHFFSLQVANWIFFMLWNNKCIKFVMLALNAFPSCHSFILILGNSKLQQTAVRLLWHLRNYTKTPNPLPL.

Residues 1 to 7 (MATELDK) are Extracellular-facing. A helical transmembrane segment spans residues 8 to 28 (IFLILAIAEFIISMLGNVFIG). Residues 29–50 (LVNCSEGIKNQKVFSADFILTC) are Cytoplasmic-facing. A helical transmembrane segment spans residues 51–71 (LAISTIGQLLVILFDSFLVGL). Residues 72–101 (ASHLYTTYRLGKTVIMLWHMTNHLTTWLAT) are Extracellular-facing. A helical transmembrane segment spans residues 102–122 (CLSIFYFFKIAHFPHSLFLWL). Residues 123-127 (RWRMN) lie on the Cytoplasmic side of the membrane. A helical transmembrane segment spans residues 128–148 (GMIVMLLILSLFLLIFDSLVL). Over 149–187 (EIFIDISLNIIDKSNLTLYLDESKTLYDKLSILKTLLSL) the chain is Extracellular. Asparagine 163 carries N-linked (GlcNAc...) asparagine glycosylation. The chain crosses the membrane as a helical span at residues 188 to 208 (TSFIPFSLFLTSLLFLFLSLV). Residues 209–238 (RHTRNLKLSSLGSRDSSTEAHRRAMKMVMS) lie on the Cytoplasmic side of the membrane. The helical transmembrane segment at 239-259 (FLFLFIVHFFSLQVANWIFFM) threads the bilayer. Residues 260–265 (LWNNKC) are Extracellular-facing. Residues 266-286 (IKFVMLALNAFPSCHSFILIL) traverse the membrane as a helical segment. Residues 287–314 (GNSKLQQTAVRLLWHLRNYTKTPNPLPL) lie on the Cytoplasmic side of the membrane.

Belongs to the G-protein coupled receptor T2R family.

The protein resides in the membrane. Functionally, receptor that may play a role in the perception of bitterness and is gustducin-linked. May play a role in sensing the chemical composition of the gastrointestinal content. The activity of this receptor may stimulate alpha gustducin, mediate PLC-beta-2 activation and lead to the gating of TRPM5. This chain is Taste receptor type 2 member 42 (TAS2R42), found in Homo sapiens (Human).